A 271-amino-acid chain; its full sequence is Eukaryotic translation initiation factor 2 subunit beta (271 aa).

Residues 223–247 (CLGCQSPDTILSKENRLFFLRCEKC) form a C4-type zinc finger.

The protein belongs to the eIF-2-beta/eIF-5 family. As to quaternary structure, eukaryotic translation initiation factor 2 eIF2 is a heterotrimeric complex composed of an alpha, a beta and a gamma subunit.

The protein localises to the cytoplasm. Its subcellular location is the cytosol. Functionally, component of the eIF2 complex that functions in the early steps of protein synthesis by forming a ternary complex with GTP and initiator tRNA. This complex binds to a 40S ribosomal subunit, followed by mRNA binding to form a 43S pre-initiation complex (43S PIC). Junction of the 60S ribosomal subunit to form the 80S initiation complex is preceded by hydrolysis of the GTP bound to eIF2 and release of an eIF2-GDP binary complex. In order for eIF2 to recycle and catalyze another round of initiation, the GDP bound to eIF2 must exchange with GTP by way of a reaction catalyzed by eIF2B. This is Eukaryotic translation initiation factor 2 subunit beta from Malus domestica (Apple).